The primary structure comprises 471 residues: UDP-N-acetylmuramate--L-alanine ligase (471 aa).

An ATP-binding site is contributed by G114–T120.

This sequence belongs to the MurCDEF family.

The protein localises to the cytoplasm. It catalyses the reaction UDP-N-acetyl-alpha-D-muramate + L-alanine + ATP = UDP-N-acetyl-alpha-D-muramoyl-L-alanine + ADP + phosphate + H(+). It participates in cell wall biogenesis; peptidoglycan biosynthesis. Functionally, cell wall formation. The sequence is that of UDP-N-acetylmuramate--L-alanine ligase from Chlorobaculum parvum (strain DSM 263 / NCIMB 8327) (Chlorobium vibrioforme subsp. thiosulfatophilum).